Here is a 315-residue protein sequence, read N- to C-terminus: 4-diphosphocytidyl-2-C-methyl-D-erythritol kinase (315 aa).

Lys-11 is an active-site residue. Residue 99–109 coordinates ATP; sequence PMAAGLAGGSA. Asp-141 is a catalytic residue.

This sequence belongs to the GHMP kinase family. IspE subfamily.

The enzyme catalyses 4-CDP-2-C-methyl-D-erythritol + ATP = 4-CDP-2-C-methyl-D-erythritol 2-phosphate + ADP + H(+). Its pathway is isoprenoid biosynthesis; isopentenyl diphosphate biosynthesis via DXP pathway; isopentenyl diphosphate from 1-deoxy-D-xylulose 5-phosphate: step 3/6. Its function is as follows. Catalyzes the phosphorylation of the position 2 hydroxy group of 4-diphosphocytidyl-2C-methyl-D-erythritol. This Synechocystis sp. (strain ATCC 27184 / PCC 6803 / Kazusa) protein is 4-diphosphocytidyl-2-C-methyl-D-erythritol kinase.